Reading from the N-terminus, the 346-residue chain is MSFRTIEWRDNKVIMIDQTRLPAEEVYNEYTDFQSVAQAIRGMVVRGAPAIGIAAAMGVALGAREIIADSFDTFYRQLENVCDVIGRTRPTAVNLFWGLERMKRVALQHKELDLNSIRELLKAEAISIETEDLAICKEIGRHGAALVKEGASILTHCNAGGLATAGYGTALGVIRGAHEAGKGIRVFADETRPWLQGARLTAWELMKDSIPVTLISDNMAGWLMRTGQIDFCVVGADRIAANGDTANKIGTYSVAVLAKENRIPFYVAAPISTLDLKLANGDLIPIEERASEEVTQIKGIQIAPEGVKVRNPAFDVTPARYITGIITEKGVVRGDYERELKALVGQ.

Residues 46–48 (RGA), R89, and Q196 each bind substrate. The Proton donor role is filled by D237. 247–248 (NK) is a binding site for substrate.

Belongs to the eIF-2B alpha/beta/delta subunits family. MtnA subfamily.

It carries out the reaction 5-(methylsulfanyl)-alpha-D-ribose 1-phosphate = 5-(methylsulfanyl)-D-ribulose 1-phosphate. Its pathway is amino-acid biosynthesis; L-methionine biosynthesis via salvage pathway; L-methionine from S-methyl-5-thio-alpha-D-ribose 1-phosphate: step 1/6. Catalyzes the interconversion of methylthioribose-1-phosphate (MTR-1-P) into methylthioribulose-1-phosphate (MTRu-1-P). The chain is Methylthioribose-1-phosphate isomerase from Geobacter sp. (strain M21).